We begin with the raw amino-acid sequence, 188 residues long: dCTP deaminase (188 aa).

DCTP-binding positions include 111–116 (KSTYAR), 135–137 (TLE), Gln156, Tyr170, Lys179, and Gln180. Glu137 serves as the catalytic Proton donor/acceptor.

It belongs to the dCTP deaminase family. In terms of assembly, homotrimer.

It carries out the reaction dCTP + H2O + H(+) = dUTP + NH4(+). The protein operates within pyrimidine metabolism; dUMP biosynthesis; dUMP from dCTP (dUTP route): step 1/2. Its function is as follows. Catalyzes the deamination of dCTP to dUTP. This chain is dCTP deaminase, found in Rickettsia africae (strain ESF-5).